A 546-amino-acid polypeptide reads, in one-letter code: Chaperonin GroEL (546 aa).

ATP-binding positions include 29 to 32 (TMGP), Lys-50, 86 to 90 (DGTTT), Gly-414, and Asp-492.

It belongs to the chaperonin (HSP60) family. In terms of assembly, forms a cylinder of 14 subunits composed of two heptameric rings stacked back-to-back. Interacts with the co-chaperonin GroES.

The protein localises to the cytoplasm. It carries out the reaction ATP + H2O + a folded polypeptide = ADP + phosphate + an unfolded polypeptide.. Its function is as follows. Together with its co-chaperonin GroES, plays an essential role in assisting protein folding. The GroEL-GroES system forms a nano-cage that allows encapsulation of the non-native substrate proteins and provides a physical environment optimized to promote and accelerate protein folding. The sequence is that of Chaperonin GroEL from Helicobacter pylori (strain J99 / ATCC 700824) (Campylobacter pylori J99).